Consider the following 233-residue polypeptide: Enolase-phosphatase E1 (233 aa).

Asp-6 and Glu-8 together coordinate Mg(2+). Residues 128-129 and Lys-163 contribute to the substrate site; that span reads SS. Residue Asp-188 coordinates Mg(2+).

It belongs to the HAD-like hydrolase superfamily. MasA/MtnC family. Monomer. The cofactor is Mg(2+).

It localises to the cytoplasm. It is found in the nucleus. It carries out the reaction 5-methylsulfanyl-2,3-dioxopentyl phosphate + H2O = 1,2-dihydroxy-5-(methylsulfanyl)pent-1-en-3-one + phosphate. The protein operates within amino-acid biosynthesis; L-methionine biosynthesis via salvage pathway; L-methionine from S-methyl-5-thio-alpha-D-ribose 1-phosphate: step 3/6. It participates in amino-acid biosynthesis; L-methionine biosynthesis via salvage pathway; L-methionine from S-methyl-5-thio-alpha-D-ribose 1-phosphate: step 4/6. Functionally, bifunctional enzyme that catalyzes the enolization of 2,3-diketo-5-methylthiopentyl-1-phosphate (DK-MTP-1-P) into the intermediate 2-hydroxy-3-keto-5-methylthiopentenyl-1-phosphate (HK-MTPenyl-1-P), which is then dephosphorylated to form the acireductone 1,2-dihydroxy-3-keto-5-methylthiopentene (DHK-MTPene). This is Enolase-phosphatase E1 from Yarrowia lipolytica (strain CLIB 122 / E 150) (Yeast).